Consider the following 225-residue polypeptide: Pyridoxine/pyridoxamine 5'-phosphate oxidase (225 aa).

Substrate-binding positions include 21 to 24 and lysine 79; that span reads RKSY. Residues 74–79, 89–90, arginine 95, and lysine 96 contribute to the FMN site; these read RVVLIK and YT. Residues tyrosine 136, arginine 140, and serine 144 each coordinate substrate. FMN-binding positions include 153–154 and tryptophan 197; that span reads QS. 203–205 is a substrate binding site; sequence RLH. FMN is bound at residue arginine 207.

The protein belongs to the pyridoxamine 5'-phosphate oxidase family. Homodimer. It depends on FMN as a cofactor.

It catalyses the reaction pyridoxamine 5'-phosphate + O2 + H2O = pyridoxal 5'-phosphate + H2O2 + NH4(+). The catalysed reaction is pyridoxine 5'-phosphate + O2 = pyridoxal 5'-phosphate + H2O2. It functions in the pathway cofactor metabolism; pyridoxal 5'-phosphate salvage; pyridoxal 5'-phosphate from pyridoxamine 5'-phosphate: step 1/1. The protein operates within cofactor metabolism; pyridoxal 5'-phosphate salvage; pyridoxal 5'-phosphate from pyridoxine 5'-phosphate: step 1/1. Its function is as follows. Catalyzes the oxidation of either pyridoxine 5'-phosphate (PNP) or pyridoxamine 5'-phosphate (PMP) into pyridoxal 5'-phosphate (PLP). The sequence is that of Pyridoxine/pyridoxamine 5'-phosphate oxidase from Paracidovorax citrulli (strain AAC00-1) (Acidovorax citrulli).